We begin with the raw amino-acid sequence, 672 residues long: MHEVGLFVDLNSFTQLILTLFFVSIGLLYFVKRTAAKYFEVGGGSGGFDRDHRRDFMVSDTAECSVCGKATTKKCSRCKSVRYCSAACQTSDWKSGHKLKCKGFRSTDSSPVRRDDIDFEASLFGNRSASKKTRIALVPQQSQSKATLKPTDVLFPYESFVRYYNWDRPIMAPCGLTNCGNSCFANVVLQCLSWTRPLVAYLLERGHKRECRRNDWCFLCEFENHLDRANYSRFPFSPMNIISRLPNIGGNLGYGRQEDAHELMRFAIDMMQSVCLDEFGGEKVVPPRAQETTLIQYIFGGLLQSQVQCTACSNVSDQYENMMDLTVEIHGDAVSLEECLDQFTAKEWLQGDNLYKCDRCDDYVKACKRLSIRCAPNILTIALKRFQGGRFGKLNKRISFPETFDLGPYMSGGGEGSDVYKLYAVIVHLDMLNASFFGHYICYVKDFRGNWYRIDDSEVEKVELEDVLSQRAYMLLYSRVQPRPSNLRSEESQDEKKTDTLNTESNQDGSVESSGVGTNDTSVSSLCNGIISHSEDPEYEKESSLSASVPVSEEGKEVDVKVDTVDSESNRSIDMEHDSGTDHQEEEANGKEDPTVENLAVDSSCLDITTPSPSAATEFIPQENERSDTESKPLEKEHSDTESNKPLEKEHLDSESKPLEKEHSDTEMIDAQ.

Residues 11-31 (NSFTQLILTLFFVSIGLLYFV) form a helical membrane-spanning segment. Zn(2+) contacts are provided by C64, C67, C75, C78, C84, C88, H97, and C101. An MYND-type zinc finger spans residues 64-101 (CSVCGKATTKKCSRCKSVRYCSAACQTSDWKSGHKLKC). One can recognise a USP domain in the interval 174–480 (CGLTNCGNSC…RAYMLLYSRV (307 aa)). The active-site Nucleophile is C183. H439 (proton acceptor) is an active-site residue. The segment at 484–672 (PSNLRSEESQ…HSDTEMIDAQ (189 aa)) is disordered. Basic and acidic residues predominate over residues 488-499 (RSEESQDEKKTD). Residues 500–527 (TLNTESNQDGSVESSGVGTNDTSVSSLC) show a composition bias toward polar residues. 2 stretches are compositionally biased toward basic and acidic residues: residues 533-543 (HSEDPEYEKES) and 553-594 (EEGK…KEDP). Over residues 606–615 (LDITTPSPSA) the composition is skewed to polar residues. Residues 623-666 (ENERSDTESKPLEKEHSDTESNKPLEKEHLDSESKPLEKEHSDT) show a composition bias toward basic and acidic residues.

Belongs to the peptidase C19 family.

The protein resides in the membrane. The catalysed reaction is Thiol-dependent hydrolysis of ester, thioester, amide, peptide and isopeptide bonds formed by the C-terminal Gly of ubiquitin (a 76-residue protein attached to proteins as an intracellular targeting signal).. In terms of biological role, recognizes and hydrolyzes the peptide bond at the C-terminal Gly of ubiquitin. Involved in the processing of poly-ubiquitin precursors as well as that of ubiquitinated proteins. This is Ubiquitin carboxyl-terminal hydrolase 19 (UBP19) from Arabidopsis thaliana (Mouse-ear cress).